The sequence spans 358 residues: DNA integrity scanning protein DisA (358 aa).

One can recognise a DAC domain in the interval 6–144 (RPTLREAVAR…RGERHVLTDS (139 aa)). ATP is bound by residues Gly73, Leu91, and 104–108 (TRHRS).

The protein belongs to the DisA family. Homooctamer. The cofactor is Mg(2+).

It carries out the reaction 2 ATP = 3',3'-c-di-AMP + 2 diphosphate. Its function is as follows. Participates in a DNA-damage check-point. DisA forms globular foci that rapidly scan along the chromosomes searching for lesions. Functionally, also has diadenylate cyclase activity, catalyzing the condensation of 2 ATP molecules into cyclic di-AMP (c-di-AMP). c-di-AMP likely acts as a signaling molecule that may couple DNA integrity with a cellular process. The chain is DNA integrity scanning protein DisA from Mycobacterium tuberculosis (strain ATCC 25177 / H37Ra).